The following is a 621-amino-acid chain: NADPH-dependent diflavin oxidoreductase 1 (621 aa).

In terms of domain architecture, Flavodoxin-like spans 6–168 (IAVLYGSETG…VYFEFEKRII (163 aa)). Residues 12–17 (SETGNA), 59–62 (STTG), 106–115 (LGDSSYPKFN), and E142 each bind FMN. An FAD-binding FR-type domain is found at 224-489 (KLIKTGTITL…VGPGVGLAPL (266 aa)). FAD-binding positions include R381, 411 to 414 (RLYS), and 443 to 446 (GVCT). Residues 536-537 (SR) and 545-549 (TKYVQ) contribute to the NADP(+) site. W621 is an FAD binding site.

It belongs to the NADPH-dependent diflavin oxidoreductase NDOR1 family. This sequence in the N-terminal section; belongs to the flavodoxin family. In the C-terminal section; belongs to the flavoprotein pyridine nucleotide cytochrome reductase family. As to quaternary structure, interacts with DRE2; as part of the cytosolic iron-sulfur (Fe-S) protein assembly (CIA) machinery. FAD serves as cofactor. Requires FMN as cofactor.

Its subcellular location is the cytoplasm. The protein resides in the mitochondrion. It catalyses the reaction 2 oxidized [2Fe-2S]-[protein] + NADPH = 2 reduced [2Fe-2S]-[protein] + NADP(+) + H(+). In terms of biological role, NADPH-dependent reductase which is a central component of the cytosolic iron-sulfur (Fe-S) protein assembly (CIA) machinery. Transfers electrons from NADPH via its FAD and FMN prosthetic groups to the [2Fe-2S] cluster of DRE2, another key component of the CIA machinery. In turn, this reduced cluster provides electrons for assembly of cytosolic iron-sulfur cluster proteins. Positively controls H(2)O(2)-induced cell death. The protein is NADPH-dependent diflavin oxidoreductase 1 of Candida glabrata (strain ATCC 2001 / BCRC 20586 / JCM 3761 / NBRC 0622 / NRRL Y-65 / CBS 138) (Yeast).